The sequence spans 638 residues: Voltage-gated potassium channel KCNC2 (638 aa).

Residues Met-1–Arg-229 are Cytoplasmic-facing. Residues Leu-47–Ser-75 form a disordered region. Pro residues predominate over residues Pro-56 to Pro-72. Residues His-124, Cys-130, Cys-151, and Cys-152 each coordinate Zn(2+). Residues Phe-230–Leu-248 traverse the membrane as a helical segment. N-linked (GlcNAc...) asparagine glycans are attached at residues Asn-259 and Asn-266. The helical transmembrane segment at Tyr-284–Phe-303 threads the bilayer. Topologically, residues Ser-304–Leu-314 are cytoplasmic. Residues Leu-315–Ser-337 form a helical membrane-spanning segment. The helical; Voltage-sensor transmembrane segment at Phe-346–Leu-368 threads the bilayer. Residues Arg-369–Glu-381 are Cytoplasmic-facing. The chain crosses the membrane as a helical span at residues Phe-382 to Tyr-401. Positions 437, 438, 439, and 440 each coordinate K(+). Residues Thr-437–Asp-442 carry the Selectivity filter motif. The helical transmembrane segment at Met-451–Val-473 threads the bilayer. Residues Asn-474–Leu-638 are Cytoplasmic-facing. Positions Ser-538–Gly-572 are disordered. The residue at position 564 (Ser-564) is a Phosphoserine; by PKA. The residue at position 600 (Ser-600) is a Phosphoserine.

The protein belongs to the potassium channel family. C (Shaw) (TC 1.A.1.2) subfamily. Kv3.2/KCNC2 sub-subfamily. Homotetramer and heterotetramer with other channel-forming alpha subunits, such as KCNC1. Interacts with KCNC1. Homotetramer or heterotetramer channel activity is regulated by association with modulating ancillary subunits such as KCNE1, KCNE2 and KCNE3, creating a functionally diverse range of channel complexes. Interacts with KCNE1, KCNE2 and KCNE3. Post-translationally, phosphorylated by PKA in cortical synaptosomes. cAMP-dependent phosphorylation inhibits channel activity. Histamine H2 receptor- and PKA-induced phosphorylation extends action potential spike duration, reduces action potential spike amplitude, sustains maximum firing frequency in hippocampal interneurons; also reduces the incidence of high-frequency oscillations in hippocampal CA3 pyramidal cell layers. In terms of tissue distribution, expressed in neurons of the visual cortex during postnatal development. Expressed in neurons of the globus pallidus at postnatal age day 7 (P7), onward. Expressed in thalamic relay neurons. Expressed in neurons in layer IV and deeper cortical layers of the neocortex. Expressed in hippocampal interneurons. Expressed in nonpyramidal interneurons in the basolateral amygdala. Expressed in retinal ganglion cells (at protein level). Widely expressed in the brain. Expressed in numerous thalamic relay neurons throughout the dorsal thalamus. Expressed in interneurons of the deep layers V-VI of the cerebral cortex, the CA1 and CA3 pyramidal and dentate gyrus (DG) granule cells of the hippocampus, in neurons of the caudate-putamen, globus pallidus and subthalamic nucleus. Also expressed in the optic layer of interior colliculus, the inferior colliculus, the red nucleus, the medial geniculate, the ventral lateral lemiscus, the reticulotegmental nucleus and in the deep cerebellar nuclei. Expressed in globus pallidus (GP) neurons.

It is found in the cell membrane. It localises to the membrane. The protein localises to the perikaryon. Its subcellular location is the cell projection. The protein resides in the axon. It is found in the synapse. It localises to the synaptosome. The protein localises to the dendrite. Its subcellular location is the postsynaptic cell membrane. The protein resides in the presynaptic cell membrane. It is found in the apical cell membrane. It localises to the basolateral cell membrane. The catalysed reaction is K(+)(in) = K(+)(out). Its activity is regulated as follows. Inhibited by Stichodactyla helianthus peptide ShK. Inhibited by millimolar levels of tetraethylammonium (TEA). Contrary to other channels, inhibited only by millimolar levels of 4-aminopyridine (4-AP). Functionally, voltage-gated potassium channel that mediates transmembrane potassium transport in excitable membranes, primarily in the brain. Contributes to the regulation of the fast action potential repolarization and in sustained high-frequency firing in neurons of the central nervous system. Homotetramer channels mediate delayed-rectifier voltage-dependent potassium currents that activate rapidly at high-threshold voltages and inactivate slowly. Forms tetrameric channels through which potassium ions pass in accordance with their electrochemical gradient. The channel alternates between opened and closed conformations in response to the voltage difference across the membrane. Can form functional homotetrameric channels and heterotetrameric channels that contain variable proportions of KCNC1, and possibly other family members as well; channel properties depend on the type of alpha subunits that are part of the channel. Channel properties may be modulated either by the association with ancillary subunits, such as KCNE1, KCNE2 and KCNE3 or indirectly by nitric oxide (NO) through a cGMP- and PKG-mediated signaling cascade, slowing channel activation and deactivation of delayed rectifier potassium channels. Contributes to fire sustained trains of very brief action potentials at high frequency in retinal ganglion cells, thalamocortical and suprachiasmatic nucleus (SCN) neurons and in hippocampal and neocortical interneurons. Sustained maximal action potential firing frequency in inhibitory hippocampal interneurons is negatively modulated by histamine H2 receptor activation in a cAMP- and protein kinase (PKA) phosphorylation-dependent manner. Plays a role in maintaining the fidelity of synaptic transmission in neocortical GABAergic interneurons by generating action potential (AP) repolarization at nerve terminals, thus reducing spike-evoked calcium influx and GABA neurotransmitter release. Required for long-range synchronization of gamma oscillations over distance in the neocortex. Contributes to the modulation of the circadian rhythm of spontaneous action potential firing in suprachiasmatic nucleus (SCN) neurons in a light-dependent manner. This chain is Voltage-gated potassium channel KCNC2, found in Rattus norvegicus (Rat).